The primary structure comprises 475 residues: Glucose-6-phosphate 1-dehydrogenase gcd1 (475 aa).

Residues R42 and K146 each contribute to the NADP(+) site. K146, E214, and D233 together coordinate D-glucose 6-phosphate. H238 acts as the Proton acceptor in catalysis. D-glucose 6-phosphate is bound at residue K332. NADP(+) contacts are provided by R342 and R365.

It belongs to the glucose-6-phosphate dehydrogenase family.

The protein resides in the cytoplasm. The enzyme catalyses D-glucose 6-phosphate + NADP(+) = 6-phospho-D-glucono-1,5-lactone + NADPH + H(+). It participates in carbohydrate degradation; pentose phosphate pathway; D-ribulose 5-phosphate from D-glucose 6-phosphate (oxidative stage): step 1/3. In terms of biological role, catalyzes the rate-limiting step of the oxidative pentose-phosphate pathway, which represents a route for the dissimilation of carbohydrates besides glycolysis. The main function of this enzyme is to provide reducing power (NADPH) and pentose phosphates for fatty acid and nucleic acid synthesis. This Schizosaccharomyces pombe (strain 972 / ATCC 24843) (Fission yeast) protein is Glucose-6-phosphate 1-dehydrogenase gcd1.